Here is a 747-residue protein sequence, read N- to C-terminus: Polyribonucleotide nucleotidyltransferase (747 aa).

Mg(2+) contacts are provided by Asp493 and Asp499. Positions 560–619 constitute a KH domain; it reads PRIITLQINPEKIGALIGPGGKTVRGITEATGAQIDIEEDGRVYISTPDAAAAQQAVAMV. Residues 629–698 enclose the S1 motif domain; sequence GDIFLGKVVR…GTGKVSLSRR (70 aa). The tract at residues 705–747 is disordered; sequence TAEDRRAAGAGRGLRDGGGRSGGSDRGGDRGPRGDDRQRPRRR. Composition is skewed to basic and acidic residues over residues 706–722 and 730–747; these read AEDR…RDGG and RGGD…PRRR.

It belongs to the polyribonucleotide nucleotidyltransferase family. It depends on Mg(2+) as a cofactor.

It localises to the cytoplasm. The catalysed reaction is RNA(n+1) + phosphate = RNA(n) + a ribonucleoside 5'-diphosphate. Functionally, involved in mRNA degradation. Catalyzes the phosphorolysis of single-stranded polyribonucleotides processively in the 3'- to 5'-direction. In Roseiflexus sp. (strain RS-1), this protein is Polyribonucleotide nucleotidyltransferase.